A 341-amino-acid chain; its full sequence is tRNA N6-adenosine threonylcarbamoyltransferase (341 aa).

The Fe cation site is built by H115 and H119. Substrate-binding positions include 138–142, D171, G184, D188, and N279; that span reads VVSGG. D307 serves as a coordination point for Fe cation.

It belongs to the KAE1 / TsaD family. The cofactor is Fe(2+).

The protein resides in the cytoplasm. The catalysed reaction is L-threonylcarbamoyladenylate + adenosine(37) in tRNA = N(6)-L-threonylcarbamoyladenosine(37) in tRNA + AMP + H(+). In terms of biological role, required for the formation of a threonylcarbamoyl group on adenosine at position 37 (t(6)A37) in tRNAs that read codons beginning with adenine. Is involved in the transfer of the threonylcarbamoyl moiety of threonylcarbamoyl-AMP (TC-AMP) to the N6 group of A37, together with TsaE and TsaB. TsaD likely plays a direct catalytic role in this reaction. The chain is tRNA N6-adenosine threonylcarbamoyltransferase from Clostridium novyi (strain NT).